Reading from the N-terminus, the 243-residue chain is Leucyl/phenylalanyl-tRNA--protein transferase (243 aa).

A disordered region spans residues 1-22 (MHSQPYLLSPTPNTPFPPAEHA).

Belongs to the L/F-transferase family.

The protein localises to the cytoplasm. It catalyses the reaction N-terminal L-lysyl-[protein] + L-leucyl-tRNA(Leu) = N-terminal L-leucyl-L-lysyl-[protein] + tRNA(Leu) + H(+). The catalysed reaction is N-terminal L-arginyl-[protein] + L-leucyl-tRNA(Leu) = N-terminal L-leucyl-L-arginyl-[protein] + tRNA(Leu) + H(+). It carries out the reaction L-phenylalanyl-tRNA(Phe) + an N-terminal L-alpha-aminoacyl-[protein] = an N-terminal L-phenylalanyl-L-alpha-aminoacyl-[protein] + tRNA(Phe). In terms of biological role, functions in the N-end rule pathway of protein degradation where it conjugates Leu, Phe and, less efficiently, Met from aminoacyl-tRNAs to the N-termini of proteins containing an N-terminal arginine or lysine. In Xylella fastidiosa (strain M23), this protein is Leucyl/phenylalanyl-tRNA--protein transferase.